The following is a 391-amino-acid chain: Ferrochelatase (391 aa).

Residues H196 and E281 each coordinate Fe cation.

The protein belongs to the ferrochelatase family.

It is found in the cytoplasm. The enzyme catalyses heme b + 2 H(+) = protoporphyrin IX + Fe(2+). It participates in porphyrin-containing compound metabolism; protoheme biosynthesis; protoheme from protoporphyrin-IX: step 1/1. Functionally, catalyzes the ferrous insertion into protoporphyrin IX. In Prochlorococcus marinus (strain NATL1A), this protein is Ferrochelatase.